Reading from the N-terminus, the 208-residue chain is Ribonuclease HII (208 aa).

Positions 11–203 (GPVAGVDEAG…VAAAHEQWLK (193 aa)) constitute an RNase H type-2 domain. A divalent metal cation-binding residues include aspartate 17, glutamate 18, and aspartate 112.

Belongs to the RNase HII family. The cofactor is Mn(2+). It depends on Mg(2+) as a cofactor.

The protein localises to the cytoplasm. It carries out the reaction Endonucleolytic cleavage to 5'-phosphomonoester.. Functionally, endonuclease that specifically degrades the RNA of RNA-DNA hybrids. The sequence is that of Ribonuclease HII from Corynebacterium jeikeium (strain K411).